The chain runs to 313 residues: Putative serine protease 29 (313 aa).

The segment covering 1-22 has biased composition (pro residues); it reads MPTTPDPGSEPPARTPRPPPLT. The disordered stretch occupies residues 1–27; sequence MPTTPDPGSEPPARTPRPPPLTPGLSP. Residues 68-310 enclose the Peptidase S1 domain; that stretch reads IVGGHNAPPG…YVPWILQQVG (243 aa). A disulfide bridge links cysteine 99 with cysteine 115. Catalysis depends on histidine 114, which acts as the Charge relay system. Asparagine 143 carries N-linked (GlcNAc...) asparagine glycosylation. The active-site Charge relay system is the aspartate 161. Cystine bridges form between cysteine 193-cysteine 268, cysteine 226-cysteine 249, and cysteine 258-cysteine 286. The active-site Charge relay system is the serine 262.

This sequence belongs to the peptidase S1 family.

The protein resides in the secreted. The polypeptide is Putative serine protease 29 (PRSS29P) (Homo sapiens (Human)).